A 382-amino-acid chain; its full sequence is Ubiquitin-like protease 4 (382 aa).

The interval 46–106 (GTHLDGSIGE…DNDEWTNQKR (61 aa)) is disordered. Acidic residues predominate over residues 84–100 (DLVDEDEEEEDEEDNDE).

It belongs to the peptidase C48 family. In terms of tissue distribution, expressed in hermaphrodite-specific neurons, head muscles, body wall muscles and pharyngeal cells.

The protein localises to the cytoplasm. Its subcellular location is the cytoskeleton. It localises to the microtubule organizing center. The protein resides in the centrosome. It is found in the nucleus. The protein localises to the mitochondrion matrix. Its pathway is protein modification; protein sumoylation. Its function is as follows. Protease required for deconjugation of smo-1 conjugates from target proteins which is necessary for cell cycle progression. Required for respiration and the maintenance of normal mitochondrial homeostasis. In response to mitochondrial stress, required for the removal of smo-1 conjugates from the transcription factor dve-1, which promotes the translocation of dve-1 from the cytosol to the nucleus to initiate the mitochondrial unfolded protein response. Furthermore, removes the smo-1 conjugates from the transcription factor atfs-1 to promote its stability and activate the mitochondrial unfolded protein response. Also plays a role in promoting mitochondrial unfolded protein response-mediated innate immunity following infection with P.aeruginosa. In Caenorhabditis elegans, this protein is Ubiquitin-like protease 4.